The following is a 40-amino-acid chain: MNRMLSLSVQSQRAPASPSPYGLKIDKRVSPDYARAGVRS.

Residues 1–14 show a composition bias toward polar residues; that stretch reads MNRMLSLSVQSQRA. Residues 1–25 are disordered; it reads MNRMLSLSVQSQRAPASPSPYGLKI.

This is an uncharacterized protein from Treponema pallidum (strain Nichols).